The following is a 343-amino-acid chain: Fructose-1,6-bisphosphatase class 1 (343 aa).

4 residues coordinate Mg(2+): glutamate 99, aspartate 121, leucine 123, and aspartate 124. Residues 124 to 127 (DGSS), asparagine 218, tyrosine 250, and lysine 283 each bind substrate. Glutamate 289 is a Mg(2+) binding site.

This sequence belongs to the FBPase class 1 family. Homotetramer. Mg(2+) serves as cofactor.

The protein localises to the cytoplasm. It carries out the reaction beta-D-fructose 1,6-bisphosphate + H2O = beta-D-fructose 6-phosphate + phosphate. It participates in carbohydrate biosynthesis; gluconeogenesis. The chain is Fructose-1,6-bisphosphatase class 1 from Leptospira biflexa serovar Patoc (strain Patoc 1 / Ames).